A 291-amino-acid chain; its full sequence is Ribonuclease Z (291 aa).

Zn(2+)-binding residues include H60, H62, D64, H65, H132, D200, and H256. The Proton acceptor role is filled by D64.

The protein belongs to the RNase Z family. Homodimer. Requires Zn(2+) as cofactor.

The catalysed reaction is Endonucleolytic cleavage of RNA, removing extra 3' nucleotides from tRNA precursor, generating 3' termini of tRNAs. A 3'-hydroxy group is left at the tRNA terminus and a 5'-phosphoryl group is left at the trailer molecule.. Its function is as follows. Zinc phosphodiesterase, which displays some tRNA 3'-processing endonuclease activity. Probably involved in tRNA maturation, by removing a 3'-trailer from precursor tRNA. This Metallosphaera sedula (strain ATCC 51363 / DSM 5348 / JCM 9185 / NBRC 15509 / TH2) protein is Ribonuclease Z.